Here is a 105-residue protein sequence, read N- to C-terminus: Large ribosomal subunit protein bL21 (105 aa).

It belongs to the bacterial ribosomal protein bL21 family. In terms of assembly, part of the 50S ribosomal subunit. Contacts protein L20.

Its function is as follows. This protein binds to 23S rRNA in the presence of protein L20. The protein is Large ribosomal subunit protein bL21 of Rickettsia peacockii (strain Rustic).